An 831-amino-acid polypeptide reads, in one-letter code: MTISALELISYYTKFLSMLSQDEINKKLEEWPKHYDPKGIELKWQNIWMTKEFWEKVFRFRDEDEKSPVFVIDTPPPFTSGELHMGHAYWVTISDTIGRFKRLEGYNVLLPQGWDTQGLPTELKVQYKLKVPKENRELFLKKCIEWTEDMIKSMRTAMIRLGYRAEWERFEYRTYESKYRRIIQKSLIDMHKMGLVEMREGPVYWCPKCETALAQSEVGYKEEDGVLAYILFPFVDGEGGVTIATTRPELLGATQAVAVNPDDERYKSLVGRKVKIPLFDKEISIIADKAVEMTFGTGAVMISTYGDPQDIRWQLTYRLPVYEVVDDKGKIKNTNGLLDGLTVKEARKKIIEILKEKGYLIKVEKITHNVLAHTERSDCLSPIEFLIKKQIYIKVLEWRNKLLEDYKKMKFTPQRMSYYLEEWIKNLEWDWNISRQRVYGTPLPFWYCDNGHLIPAPEEVLPIDPSKVNPPVEKCPHCGLDLKPVKDVADVWVDSSVTVLYLTGFYDDKSRFTKTFPSSLRLQGTDIIRTWLFYTYYRTLALAGNIPFKEVLINGQVLGPDGTRMSKSKGNVVSPLDKVDEYGADAIRLTLLDAKIGDDFPFKWDTVKSKKLLLQKLWNAGRLSYPFIGKKKINKPSKLHEIDKWILQEHKKFVQQSIEAYRNYDFYIVVESIYSYFWETIADEYLELIKHRLFMEDESAIYTLSRIIKDLLILLYPIAPHITEEMYERLYGDKMSIALENLPDTSDLEDDGEAQKLGEYIKKATSAIRTLKIQNRLAIPTPISVKIYGPDDFIAKIKIIEEDLKKTLKLIDIIYQENNEIKVELLSDHGS.

The 'HIGH' region motif lies at 77–87; the sequence is PFTSGELHMGH. The short motif at 564 to 568 is the 'KMSKS' region element; that stretch reads RMSKS. Residue Lys567 participates in ATP binding.

Belongs to the class-I aminoacyl-tRNA synthetase family. ValS type 2 subfamily.

It localises to the cytoplasm. The catalysed reaction is tRNA(Val) + L-valine + ATP = L-valyl-tRNA(Val) + AMP + diphosphate. In terms of biological role, catalyzes the attachment of valine to tRNA(Val). As ValRS can inadvertently accommodate and process structurally similar amino acids such as threonine, to avoid such errors, it has a 'posttransfer' editing activity that hydrolyzes mischarged Thr-tRNA(Val) in a tRNA-dependent manner. The protein is Valine--tRNA ligase of Sulfolobus acidocaldarius (strain ATCC 33909 / DSM 639 / JCM 8929 / NBRC 15157 / NCIMB 11770).